Here is a 222-residue protein sequence, read N- to C-terminus: Twisted gastrulation protein homolog 1 (222 aa).

The N-terminal stretch at 1-24 (MKSHYIVLALASLTFLLCLPVSQS) is a signal peptide. N80 and N146 each carry an N-linked (GlcNAc...) asparagine glycan.

Belongs to the twisted gastrulation protein family. As to quaternary structure, interacts with CHRD and/or BMP4. This interaction enhances CHRD/BMP4 complex formation. Interacts with BMP7. In terms of tissue distribution, expressed in lymph node, liver, kidney, and lung. Expression in the kidney was stronger in the medulla than in the cortex, particularly in the cells surrounding the medullary tubules. Expressed in growth plate cartilage of long bones, ribs, and digits and to a lesser extent also in the resting zone of the epiphysis, trabecular bone, and vertebral cartilage. Expression seems to be absent from other skeletal tissues including muscle, skin, and fibroblasts.

The protein localises to the secreted. In terms of biological role, may be involved in dorsoventral axis formation. Seems to antagonize BMP signaling by forming ternary complexes with CHRD and BMPs, thereby preventing BMPs from binding to their receptors. In addition to the anti-BMP function, also has pro-BMP activity, partly mediated by cleavage and degradation of CHRD, which releases BMPs from ternary complexes. May be an important modulator of BMP-regulated cartilage development and chondrocyte differentiation. May play a role in thymocyte development. The protein is Twisted gastrulation protein homolog 1 (Twsg1) of Mus musculus (Mouse).